A 296-amino-acid chain; its full sequence is Bifunctional protein FolD (296 aa).

NADP(+) is bound by residues 166-168, Ser191, and Ile232; that span reads GRS.

It belongs to the tetrahydrofolate dehydrogenase/cyclohydrolase family. As to quaternary structure, homodimer.

It catalyses the reaction (6R)-5,10-methylene-5,6,7,8-tetrahydrofolate + NADP(+) = (6R)-5,10-methenyltetrahydrofolate + NADPH. The enzyme catalyses (6R)-5,10-methenyltetrahydrofolate + H2O = (6R)-10-formyltetrahydrofolate + H(+). Its pathway is one-carbon metabolism; tetrahydrofolate interconversion. Catalyzes the oxidation of 5,10-methylenetetrahydrofolate to 5,10-methenyltetrahydrofolate and then the hydrolysis of 5,10-methenyltetrahydrofolate to 10-formyltetrahydrofolate. This chain is Bifunctional protein FolD, found in Cereibacter sphaeroides (strain ATCC 17029 / ATH 2.4.9) (Rhodobacter sphaeroides).